The following is a 359-amino-acid chain: Outer membrane protein assembly factor BamC (359 aa).

Positions Met1–Ser21 are cleaved as a signal peptide. Cys22 is lipidated: N-palmitoyl cysteine. The S-diacylglycerol cysteine moiety is linked to residue Cys22.

Belongs to the BamC family. As to quaternary structure, part of the Bam complex.

It localises to the cell outer membrane. Part of the outer membrane protein assembly complex, which is involved in assembly and insertion of beta-barrel proteins into the outer membrane. The protein is Outer membrane protein assembly factor BamC of Kangiella koreensis (strain DSM 16069 / JCM 12317 / KCTC 12182 / SW-125).